A 140-amino-acid chain; its full sequence is Putative pre-16S rRNA nuclease (140 aa).

The protein belongs to the YqgF nuclease family.

The protein resides in the cytoplasm. Functionally, could be a nuclease involved in processing of the 5'-end of pre-16S rRNA. This is Putative pre-16S rRNA nuclease from Pasteurella multocida (strain Pm70).